A 128-amino-acid polypeptide reads, in one-letter code: Fatty acid binding protein 1-B.1 (128 aa).

It belongs to the calycin superfamily. Fatty-acid binding protein (FABP) family. As to expression, expressed in the yolk syncytial layer (YSL) and subsequently in the intestinal bulb in developing embryos and larvae. In adults, expressed in the intestine.

Its subcellular location is the cytoplasm. Binds free fatty acids and their coenzyme A derivatives, bilirubin, and some other small molecules in the cytoplasm. May be involved in intracellular lipid transport. The polypeptide is Fatty acid binding protein 1-B.1 (fabp1b.1) (Danio rerio (Zebrafish)).